The following is a 396-amino-acid chain: Ribosomal RNA large subunit methyltransferase I (396 aa).

The PUA domain occupies 2-81; that stretch reads SVRLVLAKGR…ESIDIAFFSR (80 aa).

This sequence belongs to the methyltransferase superfamily. RlmI family.

It is found in the cytoplasm. The catalysed reaction is cytidine(1962) in 23S rRNA + S-adenosyl-L-methionine = 5-methylcytidine(1962) in 23S rRNA + S-adenosyl-L-homocysteine + H(+). Functionally, specifically methylates the cytosine at position 1962 (m5C1962) of 23S rRNA. The sequence is that of Ribosomal RNA large subunit methyltransferase I from Escherichia coli O157:H7.